We begin with the raw amino-acid sequence, 705 residues long: MDFAPLDSLTEKAAKKELSKLADLLDQANTAYHANDAPIISDADFDAYKRRNLAIEERFPHLKRADSPTDRVGAAPSAGFSKVVHSIAMLSLANAFDEADVSDFVQRIRKHLGLSDIEALSFTSEPKIDGLSLSLRYENGTLVQAATRGDGAIGENVTENARTIPDIPEQISNAPDVLEVRGEVYMSHADFEALNARQASAGAKLFANPRNAAAGSLRQLDARITQSRPLRFFAYAWGTLSEPLGKTQMQSIERLQSFGFQTNDLTEKCNGPEELLAQYRRIEERRASLDYDIDGVVYKVDDLDLQRRLGFRSTTPRWAIAHKFPAELAWTELQGIDIQVGRTGALSPVARLKPVTVGGVVVSNATLHNEDYIAGRDNKGDVIRGGKDIRVGDFVQVYRAGDVIPKVADVDLKKRPADAIPYVFPATCPECGSDALREAGDAVRRCTGGLICPAQAVERLKHFVSRAAFDIDGLGAKQIEQFYKDGWISEPADIFTLRDRFGSGIQQLKNRDGWGEKSANNLFDAIDDKRQIPLARLIFALGIRHVGEAASNLIAQHYSTFDAFEKSMLAAQDKDGEAWDDLLSIDGVGTVMAQSVIHAMGQAAERASIDRLVAQLDVQPSEAVVTDGSPVAGKTVVFTGTLSKMTRAEAKSRAESLGARVAGSVSAKTDFLVAGPGAGSKAKKAAELGVQTLDEDGWLALIEGL.

NAD(+)-binding positions include 42 to 46 (DADFD), 91 to 92 (SL), and Glu125. Lys127 (N6-AMP-lysine intermediate) is an active-site residue. NAD(+) is bound by residues Arg148, Glu183, Lys299, and Lys323. Residues Cys428, Cys431, Cys446, and Cys452 each coordinate Zn(2+). The BRCT domain occupies 626–705 (TDGSPVAGKT…DGWLALIEGL (80 aa)).

It belongs to the NAD-dependent DNA ligase family. LigA subfamily. It depends on Mg(2+) as a cofactor. The cofactor is Mn(2+).

It catalyses the reaction NAD(+) + (deoxyribonucleotide)n-3'-hydroxyl + 5'-phospho-(deoxyribonucleotide)m = (deoxyribonucleotide)n+m + AMP + beta-nicotinamide D-nucleotide.. Functionally, DNA ligase that catalyzes the formation of phosphodiester linkages between 5'-phosphoryl and 3'-hydroxyl groups in double-stranded DNA using NAD as a coenzyme and as the energy source for the reaction. It is essential for DNA replication and repair of damaged DNA. The sequence is that of DNA ligase from Roseobacter denitrificans (strain ATCC 33942 / OCh 114) (Erythrobacter sp. (strain OCh 114)).